The sequence spans 373 residues: DNA primase small subunit PriS (373 aa).

Residues Asp-95, Asp-97, and Asp-281 contribute to the active site.

Belongs to the eukaryotic-type primase small subunit family. Heterodimer of a small subunit (PriS) and a large subunit (PriL). The cofactor is Mg(2+). It depends on Mn(2+) as a cofactor.

In terms of biological role, catalytic subunit of DNA primase, an RNA polymerase that catalyzes the synthesis of short RNA molecules used as primers for DNA polymerase during DNA replication. The small subunit contains the primase catalytic core and has DNA synthesis activity on its own. Binding to the large subunit stabilizes and modulates the activity, increasing the rate of DNA synthesis while decreasing the length of the DNA fragments, and conferring RNA synthesis capability. The DNA polymerase activity may enable DNA primase to also catalyze primer extension after primer synthesis. May also play a role in DNA repair. This chain is DNA primase small subunit PriS, found in Nitrosopumilus maritimus (strain SCM1).